Here is a 47-residue protein sequence, read N- to C-terminus: Boigatoxin-A (47 aa).

A Pyrrolidone carboxylic acid modification is found at Gln1. 2 cysteine pairs are disulfide-bonded: Cys10–Cys34 and Cys13–Cys21.

As to quaternary structure, monomer. As to expression, expressed by the venom gland.

It localises to the secreted. This toxin may inhibit nicotinic acetylcholine receptor (nAChR). It has poorly reversible postsynaptic blocking activity in a chick muscle preparation and readily reversible inhibitory activity at a presynaptic site in the rat vas deferens prostatic segment most likely to prevent the release of neurotransmitters. In Boiga dendrophila (Mangrove snake), this protein is Boigatoxin-A.